The following is a 141-amino-acid chain: MRHYEIIFLVHPDQSEQVGGMVERYTKLIEEDGGKIHRLEDWGRRQLAYAINNVHKAHYVMLNVECTGKALAELEDNFRYNDAVIRNLVIRRDEAVTGQSEMLKAEENRSERRERRDRPEHSDSADGDDGDNSDVSDNADE.

The interval 97-141 (TGQSEMLKAEENRSERRERRDRPEHSDSADGDDGDNSDVSDNADE) is disordered. Residues 103–124 (LKAEENRSERRERRDRPEHSDS) are compositionally biased toward basic and acidic residues. The segment covering 125 to 141 (ADGDDGDNSDVSDNADE) has biased composition (acidic residues).

It belongs to the bacterial ribosomal protein bS6 family.

In terms of biological role, binds together with bS18 to 16S ribosomal RNA. In Pseudomonas syringae pv. syringae (strain B728a), this protein is Small ribosomal subunit protein bS6.